We begin with the raw amino-acid sequence, 614 residues long: DBH-like monooxygenase protein 1 (614 aa).

The N-terminal stretch at 1–22 (MRPLRPWALLLGALLGAAAAAA) is a signal peptide. Residues 23–592 (RRYPHVAVLD…SSSCLPCSLS (570 aa)) lie on the Lumenal side of the membrane. Residues 35–148 (AAYRLLWGRR…STVRVIWAYH (114 aa)) enclose the DOMON domain. N114 carries an N-linked (GlcNAc...) asparagine glycan. Y203 is an active-site residue. 2 disulfide bridges follow: C205/C257 and C242/C269. Positions 235 and 236 each coordinate Cu cation. N-linked (GlcNAc...) asparagine glycosylation is present at N247. The Cu cation site is built by H307, H389, H391, and M464. 3 disulfides stabilise this stretch: C364–C480, C368–C550, and C443–C465. Residue H389 is part of the active site. N476 and N517 each carry an N-linked (GlcNAc...) asparagine glycan. A helical transmembrane segment spans residues 593–613 (LTLLFVVYVASSTIGNFGPVV).

The protein belongs to the copper type II ascorbate-dependent monooxygenase family. The cofactor is Cu(2+).

It is found in the endoplasmic reticulum membrane. The sequence is that of DBH-like monooxygenase protein 1 (MOXD1) from Gallus gallus (Chicken).